Consider the following 276-residue polypeptide: Rhamnulose-1-phosphate aldolase (276 aa).

Residue E117 is part of the active site. Positions 141, 143, and 212 each coordinate Zn(2+).

Belongs to the aldolase class II family. RhaD subfamily. Homotetramer. The cofactor is Zn(2+).

It is found in the cytoplasm. It catalyses the reaction L-rhamnulose 1-phosphate = (S)-lactaldehyde + dihydroxyacetone phosphate. Its pathway is carbohydrate degradation; L-rhamnose degradation; glycerone phosphate from L-rhamnose: step 3/3. Catalyzes the reversible cleavage of L-rhamnulose-1-phosphate to dihydroxyacetone phosphate (DHAP) and L-lactaldehyde. This is Rhamnulose-1-phosphate aldolase from Klebsiella pneumoniae (strain 342).